An 84-amino-acid polypeptide reads, in one-letter code: uncharacterized protein (84 aa).

In terms of biological role, this protein may be involved in virus assembly. This is an uncharacterized protein from Saccharolobus solfataricus (Sulfolobus solfataricus).